The chain runs to 31 residues: Cytochrome b6-f complex subunit 6 (31 aa).

Residues 4–26 (LTSYFGFLLAALTITSALFIGLS) traverse the membrane as a helical segment.

The protein belongs to the PetL family. The 4 large subunits of the cytochrome b6-f complex are cytochrome b6, subunit IV (17 kDa polypeptide, PetD), cytochrome f and the Rieske protein, while the 4 small subunits are PetG, PetL, PetM and PetN. The complex functions as a dimer.

Its subcellular location is the plastid. It localises to the chloroplast thylakoid membrane. In terms of biological role, component of the cytochrome b6-f complex, which mediates electron transfer between photosystem II (PSII) and photosystem I (PSI), cyclic electron flow around PSI, and state transitions. PetL is important for photoautotrophic growth as well as for electron transfer efficiency and stability of the cytochrome b6-f complex. In Aethionema grandiflorum (Persian stone-cress), this protein is Cytochrome b6-f complex subunit 6.